A 430-amino-acid polypeptide reads, in one-letter code: UDP-N-acetylglucosamine 1-carboxyvinyltransferase 1 (430 aa).

Residue 22–23 (KN) coordinates phosphoenolpyruvate. Arg-93 is a UDP-N-acetyl-alpha-D-glucosamine binding site. The active-site Proton donor is the Cys-117. Cys-117 is modified (2-(S-cysteinyl)pyruvic acid O-phosphothioketal). Residues 122 to 126 (RPVDL), Asp-305, and Val-327 contribute to the UDP-N-acetyl-alpha-D-glucosamine site.

The protein belongs to the EPSP synthase family. MurA subfamily.

It localises to the cytoplasm. The enzyme catalyses phosphoenolpyruvate + UDP-N-acetyl-alpha-D-glucosamine = UDP-N-acetyl-3-O-(1-carboxyvinyl)-alpha-D-glucosamine + phosphate. Its pathway is cell wall biogenesis; peptidoglycan biosynthesis. Functionally, cell wall formation. Adds enolpyruvyl to UDP-N-acetylglucosamine. The polypeptide is UDP-N-acetylglucosamine 1-carboxyvinyltransferase 1 (Listeria monocytogenes serovar 1/2a (strain ATCC BAA-679 / EGD-e)).